Consider the following 515-residue polypeptide: Cytochrome P450 monooxygenase janP (515 aa).

Residues 20-36 (GFLWKYAAFMVFIYLLL) form a helical membrane-spanning segment. Position 456 (Cys456) interacts with heme. Asn501 carries N-linked (GlcNAc...) asparagine glycosylation.

The protein belongs to the cytochrome P450 family. The cofactor is heme.

It localises to the membrane. The protein operates within secondary metabolite biosynthesis. In terms of biological role, cytochrome P450 monooxygenase; part of the gene cluster that mediates the biosynthesis of the indole diterpenes janthitremanes such as shearinine K or shearinine A. The geranylgeranyl diphosphate (GGPP) synthase janG catalyzes the first step in janthitremane biosynthesis via conversion of farnesyl pyrophosphate and isopentyl pyrophosphate into geranylgeranyl pyrophosphate (GGPP). Condensation of indole-3-glycerol phosphate with GGPP by the prenyl transferase janC then forms 3-geranylgeranylindole (3-GGI). Epoxidation by the FAD-dependent monooxygenase janM leads to a epoxidized-GGI that is substrate of the terpene cyclase janB for cyclization to yield paspaline. Paspaline is subsequently converted to 13-desoxypaspaline by the cytochrome P450 monooxygenase janP, via beta-PC-M6 in a series of alpha-face oxidations. The cytochrome P450 monooxygenase janQ is proposed to carry out sequential beta-face oxidation steps at C-7 and C-13 of 13-desoxypaspaline to form paspalicine and paspalinine respectively. The indole diterpene prenyltransferase janD may then convert paspalinine into shearinine K which is substrate of janO and/or additional enzymes for oxidation and cyclization to generate shearinine A. This is Cytochrome P450 monooxygenase janP from Penicillium janthinellum (Penicillium vitale).